The sequence spans 163 residues: Nucleotide-binding protein Npun_R4736 (163 aa).

Belongs to the YajQ family.

Nucleotide-binding protein. The protein is Nucleotide-binding protein Npun_R4736 of Nostoc punctiforme (strain ATCC 29133 / PCC 73102).